The chain runs to 295 residues: Glutamyl-Q tRNA(Asp) synthetase (295 aa).

Residues 5–9 (RFAPS) and Glu-41 contribute to the L-glutamate site. The 'HIGH' region motif lies at 8 to 18 (PSPTGLLHIGS). Zn(2+) contacts are provided by Cys-97, Cys-99, Tyr-117, and Cys-121. Residues Tyr-178 and Arg-196 each coordinate L-glutamate. The 'KMSKS' region motif lies at 234–238 (KWSKQ). Lys-237 serves as a coordination point for ATP.

It belongs to the class-I aminoacyl-tRNA synthetase family. GluQ subfamily. Zn(2+) is required as a cofactor.

Catalyzes the tRNA-independent activation of glutamate in presence of ATP and the subsequent transfer of glutamate onto a tRNA(Asp). Glutamate is transferred on the 2-amino-5-(4,5-dihydroxy-2-cyclopenten-1-yl) moiety of the queuosine in the wobble position of the QUC anticodon. This is Glutamyl-Q tRNA(Asp) synthetase from Neisseria meningitidis serogroup A / serotype 4A (strain DSM 15465 / Z2491).